The primary structure comprises 583 residues: Exonuclease 3'-5' domain-containing protein 2 (583 aa).

Over 1-11 (MTRESAVATKR) the chain is Mitochondrial intermembrane. The chain crosses the membrane as a helical span at residues 12 to 29 (NWAILAAGVGLVYVLVRH). The Cytoplasmic segment spans residues 30–583 (RHRLLCPLRR…AGLDAKIKET (554 aa)). The 3'-5' exonuclease domain maps to 62–228 (TTQWVLNELK…AIYQKLCRDL (167 aa)). Aspartate 83, glutamate 85, and aspartate 213 together coordinate a divalent metal cation. The span at 266-281 (GSGVTRSKGSTQSKSN) shows a compositional bias: polar residues. The interval 266 to 286 (GSGVTRSKGSTQSKSNKWVPK) is disordered.

Belongs to the EXD2 family. As to quaternary structure, homodimer. It depends on Mg(2+) as a cofactor. Mn(2+) serves as cofactor.

It is found in the mitochondrion membrane. Functionally, 3'-5' exoribonuclease required for mitochondrial metabolism. In Drosophila melanogaster (Fruit fly), this protein is Exonuclease 3'-5' domain-containing protein 2.